Here is a 357-residue protein sequence, read N- to C-terminus: SPbeta prophage-derived pesticidal crystal protein-like YokG (357 aa).

Belongs to the cry6A endotoxin family.

This Bacillus subtilis (strain 168) protein is SPbeta prophage-derived pesticidal crystal protein-like YokG (yokG).